A 301-amino-acid polypeptide reads, in one-letter code: Glycine--tRNA ligase alpha subunit (301 aa).

Belongs to the class-II aminoacyl-tRNA synthetase family. Tetramer of two alpha and two beta subunits.

It localises to the cytoplasm. The catalysed reaction is tRNA(Gly) + glycine + ATP = glycyl-tRNA(Gly) + AMP + diphosphate. The chain is Glycine--tRNA ligase alpha subunit from Campylobacter hominis (strain ATCC BAA-381 / DSM 21671 / CCUG 45161 / LMG 19568 / NCTC 13146 / CH001A).